The sequence spans 164 residues: Putative pre-16S rRNA nuclease (164 aa).

The protein belongs to the YqgF nuclease family.

The protein localises to the cytoplasm. In terms of biological role, could be a nuclease involved in processing of the 5'-end of pre-16S rRNA. In Rhizobium etli (strain CIAT 652), this protein is Putative pre-16S rRNA nuclease.